We begin with the raw amino-acid sequence, 273 residues long: Hydroxyethylthiazole kinase (273 aa).

Substrate is bound at residue Met-49. ATP-binding residues include Lys-125 and Thr-171. Gly-198 is a binding site for substrate.

It belongs to the Thz kinase family. The cofactor is Mg(2+).

The catalysed reaction is 5-(2-hydroxyethyl)-4-methylthiazole + ATP = 4-methyl-5-(2-phosphooxyethyl)-thiazole + ADP + H(+). It functions in the pathway cofactor biosynthesis; thiamine diphosphate biosynthesis; 4-methyl-5-(2-phosphoethyl)-thiazole from 5-(2-hydroxyethyl)-4-methylthiazole: step 1/1. Its function is as follows. Catalyzes the phosphorylation of the hydroxyl group of 4-methyl-5-beta-hydroxyethylthiazole (THZ). This is Hydroxyethylthiazole kinase from Natranaerobius thermophilus (strain ATCC BAA-1301 / DSM 18059 / JW/NM-WN-LF).